The chain runs to 177 residues: Protein GrpE (177 aa).

The protein belongs to the GrpE family. Homodimer.

The protein resides in the cytoplasm. In terms of biological role, participates actively in the response to hyperosmotic and heat shock by preventing the aggregation of stress-denatured proteins, in association with DnaK and GrpE. It is the nucleotide exchange factor for DnaK and may function as a thermosensor. Unfolded proteins bind initially to DnaJ; upon interaction with the DnaJ-bound protein, DnaK hydrolyzes its bound ATP, resulting in the formation of a stable complex. GrpE releases ADP from DnaK; ATP binding to DnaK triggers the release of the substrate protein, thus completing the reaction cycle. Several rounds of ATP-dependent interactions between DnaJ, DnaK and GrpE are required for fully efficient folding. In Thermus thermophilus (strain ATCC BAA-163 / DSM 7039 / HB27), this protein is Protein GrpE.